Here is a 191-residue protein sequence, read N- to C-terminus: Protein RER1A (191 aa).

Residue M1 is modified to N-acetylmethionine. 4 helical membrane passes run 39–57 (YRWIGTLVVALIYCLRVYY), 60–80 (GFYIIAYGLGIYLLNLLIGFL), 115–135 (FKFWYSMTKAFCIAFLMTFFS), and 136–156 (VFDVPVFWPILLCYWIVLFVL).

The protein belongs to the RER1 family.

The protein localises to the membrane. Involved in the retrieval of endoplasmic reticulum membrane proteins from the early Golgi compartment. The polypeptide is Protein RER1A (RER1A) (Arabidopsis thaliana (Mouse-ear cress)).